The chain runs to 1359 residues: NPC1-like intracellular cholesterol transporter 1 (1359 aa).

A signal peptide spans 1-21; that stretch reads MAEAGLRGWLLWALLLRLAQS. Over 22–284 the chain is Extracellular; it reads EPYTTIHQPG…TFYLGQMPGS (263 aa). Cystine bridges form between C33–C90, C39–C57, C78–C125, C91–C129, C113–C254, C116–C172, C189–C197, C243–C259, and C256–C263. N-linked (GlcNAc...) asparagine glycosylation is present at N54. N132 and N138 each carry an N-linked (GlcNAc...) asparagine glycan. N-linked (GlcNAc...) asparagine glycosylation is present at N244. A helical membrane pass occupies residues 285–305; that stretch reads LVLIIILCSVFAVVTILLVGF. Over 306–351 the chain is Cytoplasmic; that stretch reads RVAPARDKSKMVDPKKGTSLSDKLSFSTHTLLGQFFQGWGTWVASW. A helical membrane pass occupies residues 352–372; that stretch reads PLTILVLSVIPVVALAAGLVF. Topologically, residues 373–632 are extracellular; it reads TELTTDPVEL…DEINRTTAED (260 aa). N416, N431, N464, N479, N497, and N506 each carry an N-linked (GlcNAc...) asparagine glycan. A disulfide bridge links C471 with C485. Residues C525 and C542 are joined by a disulfide bond. A glycan (N-linked (GlcNAc...) asparagine) is linked at N626. An SSD domain is found at 632–797; it reads DLPIFATSYI…MSAFVALLSL (166 aa). The helical transmembrane segment at 633-653 threads the bilayer; sequence LPIFATSYIVIFLYISLALGS. Topologically, residues 654-666 are cytoplasmic; it reads YSSWSRVMVDSKA. The chain crosses the membrane as a helical span at residues 667-687; sequence TLGLGGVAVVLGAVMAAMGFF. Over 688–696 the chain is Extracellular; sequence SYLGIRSSL. Residues 697–717 traverse the membrane as a helical segment; that stretch reads VILQVVPFLVLSVGADNIFIF. Over 718–742 the chain is Cytoplasmic; that stretch reads VLEYQRLPRRPGEPREVHIGRALGR. Residues 743–763 traverse the membrane as a helical segment; sequence VAPSMLLCSLSEAICFFLGAL. At 764 to 776 the chain is on the extracellular side; sequence TPMPAVRTFALTS. Residues 777–797 traverse the membrane as a helical segment; the sequence is GLAVILDFLLQMSAFVALLSL. Over 798–846 the chain is Cytoplasmic; it reads DSKRQEASRLDVCCCVKPQELPPPGQGEGLLLGFFQKAYAPFLLHWITR. A helical membrane pass occupies residues 847–867; that stretch reads GVVLLLFLALFGVSLYSMCHI. Residues 868 to 1139 are Extracellular-facing; that stretch reads SVGLDQELAL…EQYLTILPEG (272 aa). Cystine bridges form between C920-C925, C966-C1024, and C980-C989. The helical transmembrane segment at 1140–1160 threads the bilayer; it reads LFMLSLCLVPTFAVSCLLLGL. The Cytoplasmic segment spans residues 1161–1168; the sequence is DLRSGLLN. Residues 1169-1189 form a helical membrane-spanning segment; it reads LLSIVMILVDTVGFMALWGIS. At 1190–1191 the chain is on the extracellular side; that stretch reads YN. A helical membrane pass occupies residues 1192 to 1212; it reads AVSLINLVSAVGMSVEFVSHI. Residues 1213–1236 lie on the Cytoplasmic side of the membrane; sequence TRSFAISTKPTWLERAKEATISMG. The helical transmembrane segment at 1237-1257 threads the bilayer; that stretch reads SAVFAGVAMTNLPGILVLGLA. At 1258–1268 the chain is on the extracellular side; sequence KAQLIQIFFFR. The chain crosses the membrane as a helical span at residues 1269-1289; it reads LNLLITLLGLLHGLVFLPVIL. Topologically, residues 1290-1359 are cytoplasmic; that stretch reads SYVGPDVNPA…NFLPNNGRQF (70 aa).

The protein belongs to the patched family. As to quaternary structure, interacts with RAB11A, MYO5B and RAB11FIP2. Interaction with RAB11A, MYO5B and RAB11FIP2 is required for proper transport to the plasma membrane upon cholesterol depletion. Interacts with NPC2. Interacts with LIMA1. Post-translationally, highly glycosylated. In terms of tissue distribution, widely expressed. Expressed in liver. Also expressed in small intestine, pancreas, kidney, lung, pancreas, spleen, heart, gall bladder, brain, testis, stomach and muscle.

Its subcellular location is the apical cell membrane. The protein localises to the cell membrane. It is found in the cytoplasmic vesicle membrane. The catalysed reaction is cholesterol(in) = cholesterol(out). It carries out the reaction sitosterol(out) = sitosterol(in). Functionally, plays a major role in cholesterol homeostasis. Critical for the uptake of cholesterol across the plasma membrane of the intestinal enterocyte. Involved in plant sterol absorption, it transports sitosterol, although at lower rates than cholesterol. Is the direct molecular target of ezetimibe, a drug that inhibits cholesterol absorption and is approved for the treatment of hypercholesterolemia. May have a function in the transport of multiple lipids and their homeostasis, thereby influencing lipid metabolism regulation. May be involved in caveolin trafficking from the plasma membrane. In addition, acts as a negative regulator of NPC2 and down-regulates its expression and secretion by inhibiting its maturation and accelerating its degradation. This chain is NPC1-like intracellular cholesterol transporter 1, found in Homo sapiens (Human).